The following is a 144-amino-acid chain: L-fucose mutarotase (144 aa).

Histidine 22 (proton donor) is an active-site residue. Substrate contacts are provided by residues aspartate 30, arginine 109, and 131–133 (YGN).

This sequence belongs to the RbsD / FucU family. FucU mutarotase subfamily. Homodecamer.

The protein resides in the cytoplasm. The enzyme catalyses alpha-L-fucose = beta-L-fucose. Its pathway is carbohydrate metabolism; L-fucose metabolism. Involved in the anomeric conversion of L-fucose. This is L-fucose mutarotase from Histophilus somni (strain 129Pt) (Haemophilus somnus).